The primary structure comprises 159 residues: Nucleotide-binding protein Avin_13410 (159 aa).

This sequence belongs to the YajQ family.

Nucleotide-binding protein. The polypeptide is Nucleotide-binding protein Avin_13410 (Azotobacter vinelandii (strain DJ / ATCC BAA-1303)).